An 865-amino-acid polypeptide reads, in one-letter code: Alanine--tRNA ligase (865 aa).

The Zn(2+) site is built by His556, His560, Cys660, and His664.

It belongs to the class-II aminoacyl-tRNA synthetase family. Zn(2+) serves as cofactor.

The protein resides in the cytoplasm. It catalyses the reaction tRNA(Ala) + L-alanine + ATP = L-alanyl-tRNA(Ala) + AMP + diphosphate. In terms of biological role, catalyzes the attachment of alanine to tRNA(Ala) in a two-step reaction: alanine is first activated by ATP to form Ala-AMP and then transferred to the acceptor end of tRNA(Ala). Also edits incorrectly charged Ser-tRNA(Ala) and Gly-tRNA(Ala) via its editing domain. This Vesicomyosocius okutanii subsp. Calyptogena okutanii (strain HA) protein is Alanine--tRNA ligase.